The primary structure comprises 686 residues: Glycine--tRNA ligase beta subunit (686 aa).

Residues 65 to 99 (ALSEEKRGPSVERAKDENGEWSKAAQGFARGQGAT) form a disordered region. Basic and acidic residues predominate over residues 67–84 (SEEKRGPSVERAKDENGE).

It belongs to the class-II aminoacyl-tRNA synthetase family. In terms of assembly, tetramer of two alpha and two beta subunits.

The protein resides in the cytoplasm. It carries out the reaction tRNA(Gly) + glycine + ATP = glycyl-tRNA(Gly) + AMP + diphosphate. This chain is Glycine--tRNA ligase beta subunit, found in Leuconostoc citreum (strain KM20).